The sequence spans 196 residues: MNIDSDIFKIQSNNVLPSRGKILISEPFLRDATFGRSVVLLIDHTEEGSMGLIINKQLPIFVNDIIKEFKYIENIPLYKGGPIATDTLFYLHTLADIPGAIPISKGLYLNGDFDEIKKYILQGNKVDRYIRFFLGYSGWESEQLSTELKENTWLVSKEENAYLMNGDTKDMWKQALEKLGSKYETWSRFPQVPTFN.

It belongs to the UPF0301 (AlgH) family.

The sequence is that of UPF0301 protein BT_1078 from Bacteroides thetaiotaomicron (strain ATCC 29148 / DSM 2079 / JCM 5827 / CCUG 10774 / NCTC 10582 / VPI-5482 / E50).